Reading from the N-terminus, the 331-residue chain is RNA/RNP complex-1-interacting phosphatase (331 aa).

One can recognise a Tyrosine-protein phosphatase domain in the interval 61–208 (FEKHLAPEEC…LRNGPIRKNW (148 aa)). The active-site Phosphocysteine intermediate is the C152. 153-158 (THGVNR) serves as a coordination point for substrate. R158 (proton donor/acceptor) is an active-site residue.

It belongs to the protein-tyrosine phosphatase family. Non-receptor class dual specificity subfamily. As to quaternary structure, monomer. May interact with SFRS7 and SFRS9/SRP30C.

Its subcellular location is the nucleus. The protein localises to the nucleus speckle. In terms of biological role, possesses RNA 5'-triphosphatase and diphosphatase activities, but displays a poor protein-tyrosine phosphatase activity. In addition, has phosphatase activity with ATP, ADP and O-methylfluorescein phosphate (in vitro). Binds to RNA. May participate in nuclear mRNA metabolism. The sequence is that of RNA/RNP complex-1-interacting phosphatase (DUSP11) from Bos taurus (Bovine).